The sequence spans 89 residues: MALSATEKSVIVKEYQVKEGDTGSPEVQVALLTANINKLQDHFQANKHDHHSRRGLIRMVNQRRKLLDYLKGKDTQRYVDLIQKLGLRR.

Belongs to the universal ribosomal protein uS15 family. Part of the 30S ribosomal subunit. Forms a bridge to the 50S subunit in the 70S ribosome, contacting the 23S rRNA.

In terms of biological role, one of the primary rRNA binding proteins, it binds directly to 16S rRNA where it helps nucleate assembly of the platform of the 30S subunit by binding and bridging several RNA helices of the 16S rRNA. Functionally, forms an intersubunit bridge (bridge B4) with the 23S rRNA of the 50S subunit in the ribosome. In Hahella chejuensis (strain KCTC 2396), this protein is Small ribosomal subunit protein uS15.